We begin with the raw amino-acid sequence, 563 residues long: Dihydroxy-acid dehydratase (563 aa).

A [2Fe-2S] cluster-binding site is contributed by cysteine 51. Residue aspartate 83 coordinates Mg(2+). Cysteine 124 contacts [2Fe-2S] cluster. The Mg(2+) site is built by aspartate 125 and lysine 126. Lysine 126 carries the N6-carboxylysine modification. Cysteine 196 provides a ligand contact to [2Fe-2S] cluster. Glutamate 448 lines the Mg(2+) pocket. Serine 474 (proton acceptor) is an active-site residue.

The protein belongs to the IlvD/Edd family. As to quaternary structure, homodimer. The cofactor is [2Fe-2S] cluster. It depends on Mg(2+) as a cofactor.

The enzyme catalyses (2R)-2,3-dihydroxy-3-methylbutanoate = 3-methyl-2-oxobutanoate + H2O. It carries out the reaction (2R,3R)-2,3-dihydroxy-3-methylpentanoate = (S)-3-methyl-2-oxopentanoate + H2O. It functions in the pathway amino-acid biosynthesis; L-isoleucine biosynthesis; L-isoleucine from 2-oxobutanoate: step 3/4. The protein operates within amino-acid biosynthesis; L-valine biosynthesis; L-valine from pyruvate: step 3/4. Its function is as follows. Functions in the biosynthesis of branched-chain amino acids. Catalyzes the dehydration of (2R,3R)-2,3-dihydroxy-3-methylpentanoate (2,3-dihydroxy-3-methylvalerate) into 2-oxo-3-methylpentanoate (2-oxo-3-methylvalerate) and of (2R)-2,3-dihydroxy-3-methylbutanoate (2,3-dihydroxyisovalerate) into 2-oxo-3-methylbutanoate (2-oxoisovalerate), the penultimate precursor to L-isoleucine and L-valine, respectively. This is Dihydroxy-acid dehydratase from Polynucleobacter necessarius subsp. necessarius (strain STIR1).